A 290-amino-acid polypeptide reads, in one-letter code: Ribosomal RNA small subunit methyltransferase A (290 aa).

Residues N27, L29, G54, E75, D100, and N125 each contribute to the S-adenosyl-L-methionine site.

The protein belongs to the class I-like SAM-binding methyltransferase superfamily. rRNA adenine N(6)-methyltransferase family. RsmA subfamily.

It localises to the cytoplasm. It catalyses the reaction adenosine(1518)/adenosine(1519) in 16S rRNA + 4 S-adenosyl-L-methionine = N(6)-dimethyladenosine(1518)/N(6)-dimethyladenosine(1519) in 16S rRNA + 4 S-adenosyl-L-homocysteine + 4 H(+). Specifically dimethylates two adjacent adenosines (A1518 and A1519) in the loop of a conserved hairpin near the 3'-end of 16S rRNA in the 30S particle. May play a critical role in biogenesis of 30S subunits. The chain is Ribosomal RNA small subunit methyltransferase A from Streptococcus pyogenes serotype M5 (strain Manfredo).